Reading from the N-terminus, the 355-residue chain is Protein-glutamate methylesterase/protein-glutamine glutaminase 3 (355 aa).

A Response regulatory domain is found at 8-126; it reads RVLVVDDSPT…AEELRRWGKE (119 aa). D59 is modified (4-aspartylphosphate). Residues 152–337 enclose the CheB-type methylesterase domain; sequence PPTGARVDIF…LASMPELILQ (186 aa). Catalysis depends on residues S166, H193, and D284.

Belongs to the CheB family. In terms of processing, phosphorylated by CheA. Phosphorylation of the N-terminal regulatory domain activates the methylesterase activity.

Its subcellular location is the cytoplasm. It catalyses the reaction [protein]-L-glutamate 5-O-methyl ester + H2O = L-glutamyl-[protein] + methanol + H(+). The enzyme catalyses L-glutaminyl-[protein] + H2O = L-glutamyl-[protein] + NH4(+). In terms of biological role, involved in chemotaxis. Part of a chemotaxis signal transduction system that modulates chemotaxis in response to various stimuli. Catalyzes the demethylation of specific methylglutamate residues introduced into the chemoreceptors (methyl-accepting chemotaxis proteins or MCP) by CheR. Also mediates the irreversible deamidation of specific glutamine residues to glutamic acid. This Myxococcus xanthus (strain DK1622) protein is Protein-glutamate methylesterase/protein-glutamine glutaminase 3.